The sequence spans 185 residues: UPF0397 protein AYWB_013 (185 aa).

The next 5 membrane-spanning stretches (helical) occupy residues 13–33 (IGLSTTIFFVLSCFASIPVGF), 42–62 (AFLAFIAVAFGPSVGFYVGLI), 69–89 (FFLFGNVSWNWVLCSALIGFI), 109–129 (IVYFWLYQVACNFIIWGFFAP), and 148–168 (FLIVISNILAYSVVGIKLMTI).

Belongs to the UPF0397 family.

The protein localises to the cell membrane. This Aster yellows witches'-broom phytoplasma (strain AYWB) protein is UPF0397 protein AYWB_013.